Consider the following 288-residue polypeptide: Syntaxin-1A (288 aa).

Basic and acidic residues predominate over residues 1–13 (MKDRTQELRTAKD). The interval 1–20 (MKDRTQELRTAKDSDDDDDV) is disordered. Residues 1 to 265 (MKDRTQELRT…KYQSKARRKK (265 aa)) are Cytoplasmic-facing. A phosphoserine mark is found at Ser-14, Ser-64, and Ser-95. Positions 68 to 109 (DEKTKEELEELMSDIKKTANKVRSKLKSIEQSIEQEEGLNRS) form a coiled coil. Ser-188 carries the post-translational modification Phosphoserine; by DAPK1. The t-SNARE coiled-coil homology domain occupies 192-254 (LSEIETRHSE…ERAVSDTKKA (63 aa)). Glycyl lysine isopeptide (Lys-Gly) (interchain with G-Cter in SUMO) cross-links involve residues Lys-252, Lys-253, and Lys-256. The chain crosses the membrane as a helical; Anchor for type IV membrane protein span at residues 266 to 288 (IMIVICCVVLGIVIASTFGGIFG).

This sequence belongs to the syntaxin family. As to quaternary structure, part of the SNARE core complex containing SNAP25, VAMP2 and STX1A; this complex constitutes the basic catalytic machinery of the complex neurotransmitter release apparatus. The SNARE complex interacts with CPLX1. Interacts with STXBP1. The interaction with STXBP1 promotes assembly of the SNARE complex. Interacts (via C-terminus) with KCNB1 (via C-terminus); the interaction increases in a calcium-dependent manner and induces a pore-independent enhancement of exocytosis in neuroendocrine cells, chromaffin cells, pancreatic beta cells and from the soma of dorsal root ganglia (DRG) neurons. Interacts with SYTL4. Interacts with STXBP6. Interacts with PLCL1 (via C2 domain). Interacts with OTOF. Interacts with LGI3. Interacts (via the H3 domain) with SLC6A4 (via the N-terminus); this interaction regulates SLC4A6 channel conductance in thalamocortical neurons. Interacts with SYT6 and SYT8; the interaction is Ca(2+)-dependent. Interacts with VAMP8. Interacts with SNAP23. Interacts with VAPA and SYBU. Interacts with PRRT2. Interacts with SEPT8. Interacts with STXBP5L. Interacts with synaptotagmin-1/SYT1. Interacts with SEPTIN5; in the cerebellar cortex. Interacts with SEPTIN4; in the striatum. In terms of processing, phosphorylated by CK2. Phosphorylation at Ser-188 by DAPK1 significantly decreases its interaction with STXBP1. Sumoylated, sumoylation is required for regulation of synaptic vesicle endocytosis. Post-translationally, (Microbial infection) Targeted and hydrolyzed by C.botulinum neurotoxin type C (BoNT/C) which inhibits neurotransmitter release. Probably hydrolyzes the 253-Lys-|-Ala-254 bond.

It localises to the cytoplasmic vesicle. Its subcellular location is the secretory vesicle. The protein resides in the synaptic vesicle membrane. It is found in the synapse. The protein localises to the synaptosome. It localises to the cell membrane. Functionally, plays an essential role in hormone and neurotransmitter calcium-dependent exocytosis and endocytosis. Part of the SNARE (Soluble NSF Attachment Receptor) complex composed of SNAP25, STX1A and VAMP2 which mediates the fusion of synaptic vesicles with the presynaptic plasma membrane. STX1A and SNAP25 are localized on the plasma membrane while VAMP2 resides in synaptic vesicles. The pairing of the three SNAREs from the N-terminal SNARE motifs to the C-terminal anchors leads to the formation of the SNARE complex, which brings membranes into close proximity and results in final fusion. Participates in the calcium-dependent regulation of acrosomal exocytosis in sperm. Also plays an important role in the exocytosis of hormones such as insulin or glucagon-like peptide 1 (GLP-1). The chain is Syntaxin-1A (STX1A) from Bos taurus (Bovine).